We begin with the raw amino-acid sequence, 292 residues long: Putative gonadotropin-releasing hormone II receptor (292 aa).

The Extracellular segment spans residues 1-28 (MSAGNGTPWDATWNITVQWLAVDIACRT). A disulfide bridge connects residues Cys-26 and Cys-101. A helical transmembrane segment spans residues 29–49 (LMFLKLMATYSAAFLPVVIGL). Residues 50–67 (DRQAAVLNPLGSRSGVRK) are Cytoplasmic-facing. The chain crosses the membrane as a helical span at residues 68–88 (LLGAAWGLSFLLAFPQLFLFH). At 89-115 (TVHCAGPVPFTQCVTKGSFKAQWQETT) the chain is on the extracellular side. The helical transmembrane segment at 116–136 (YNLFTFCCLFLLPLTAMAICY) threads the bilayer. Topologically, residues 137–177 (SRIVLSVSRPQTRKGSHAPAGEFALPRSFDNCPRVRLRALR) are cytoplasmic. A helical transmembrane segment spans residues 178-198 (LALLILLTFILCWTPYYLLGM). Residues 199–216 (WYWFSPTMLTEVPPSLSH) lie on the Extracellular side of the membrane. Residues 217–237 (ILFLLGLLNAPLDPLLYGAFT) traverse the membrane as a helical segment. Residues 238-292 (LGCRRGHQELSIDSSKEGSGRMLQEEIHAFRQLEVQKTVTSRRAGETKGISITSI) lie on the Cytoplasmic side of the membrane.

Belongs to the G-protein coupled receptor 1 family. Post-translationally, phosphorylated on the C-terminal cytoplasmic tail. Expressed in many tissues.

It localises to the cell membrane. Its function is as follows. Putative receptor for gonadotropin releasing hormone II (GnRH II) which is most probably non-functional. The sequence is that of Putative gonadotropin-releasing hormone II receptor (GNRHR2) from Homo sapiens (Human).